Consider the following 295-residue polypeptide: Epidermal growth factor-like protein 8 (295 aa).

A signal peptide spans M1 to G25. One can recognise an EMI domain in the interval S34 to E112. Intrachain disulfides connect C38–C97, C65–C71, C96–C110, C115–C125, C119–C131, C133–C142, C149–C160, C156–C169, and C171–C184. An N-linked (GlcNAc...) asparagine glycan is attached at N50. The 33-residue stretch at D111–H143 folds into the EGF-like 1 domain. One can recognise an EGF-like 2; calcium-binding domain in the interval D145–A185. A coiled-coil region spans residues V202 to A233.

The protein resides in the secreted. In Sus scrofa (Pig), this protein is Epidermal growth factor-like protein 8 (EGFL8).